Here is a 446-residue protein sequence, read N- to C-terminus: Phosphoglucosamine mutase (446 aa).

Residue S101 is the Phosphoserine intermediate of the active site. Positions 101, 240, 242, and 244 each coordinate Mg(2+). A Phosphoserine modification is found at S101.

This sequence belongs to the phosphohexose mutase family. Mg(2+) is required as a cofactor. Activated by phosphorylation.

The enzyme catalyses alpha-D-glucosamine 1-phosphate = D-glucosamine 6-phosphate. Its function is as follows. Catalyzes the conversion of glucosamine-6-phosphate to glucosamine-1-phosphate. The protein is Phosphoglucosamine mutase of Coxiella burnetii (strain RSA 331 / Henzerling II).